We begin with the raw amino-acid sequence, 286 residues long: Pantothenate synthetase (286 aa).

32–39 (MGALHEGH) provides a ligand contact to ATP. Catalysis depends on H39, which acts as the Proton donor. A (R)-pantoate-binding site is contributed by Q63. A beta-alanine-binding site is contributed by Q63. 149 to 152 (GEKD) is an ATP binding site. Q155 provides a ligand contact to (R)-pantoate. ATP contacts are provided by residues L178 and 186–189 (SSSR).

Belongs to the pantothenate synthetase family. In terms of assembly, homodimer.

It is found in the cytoplasm. It carries out the reaction (R)-pantoate + beta-alanine + ATP = (R)-pantothenate + AMP + diphosphate + H(+). It functions in the pathway cofactor biosynthesis; (R)-pantothenate biosynthesis; (R)-pantothenate from (R)-pantoate and beta-alanine: step 1/1. In terms of biological role, catalyzes the condensation of pantoate with beta-alanine in an ATP-dependent reaction via a pantoyl-adenylate intermediate. This chain is Pantothenate synthetase, found in Bartonella quintana (strain Toulouse) (Rochalimaea quintana).